The primary structure comprises 420 residues: Protein disulfide isomerase Creld1 (420 aa).

Positions 1 to 29 (MAPQPLRGLVPFLLWCLSLFLSLPGPVWL) are cleaved as a signal peptide. Residues 30 to 362 (QPSPPPHSAP…GFFAEMTEDE (333 aa)) lie on the Extracellular side of the membrane. The short motif at 46–49 (CHTC) is the CXXC element. Disulfide bonds link cysteine 46/cysteine 49, cysteine 155/cysteine 169, cysteine 163/cysteine 181, and cysteine 183/cysteine 192. Residues 153-193 (LPCPGGTERPCGGYGQCEGEGTRGGSGHCDCQAGYGGEACG) enclose the EGF-like 1 domain. Residue asparagine 205 is glycosylated (N-linked (GlcNAc...) asparagine). 2 FU repeats span residues 208 to 255 (HLVC…EQAT) and 268 to 315 (SYEC…VVCP). Residues 278-281 (CLGC) carry the CXXC motif. 4 disulfide bridges follow: cysteine 278–cysteine 281, cysteine 309–cysteine 321, cysteine 314–cysteine 330, and cysteine 332–cysteine 343. The region spanning 305–342 (DVDECETVVCPGENEQCENTEGSYRCVCAEGFRQEDGI) is the EGF-like 2; calcium-binding domain. Residues 363–383 (MVVLQQMFFGVIICALATLAA) form a helical membrane-spanning segment. Lysine 384 is a topological domain (cytoplasmic). The chain crosses the membrane as a helical span at residues 385-405 (GDLVFTAIFIGAVAAMTGYWL). Topologically, residues 406 to 420 (SERSDRVLEGFIKGR) are extracellular.

This sequence belongs to the CRELD family.

The protein resides in the membrane. The enzyme catalyses Catalyzes the rearrangement of -S-S- bonds in proteins.. Functionally, protein disulfide isomerase. Promotes the localization of acetylcholine receptors (AChRs) to the plasma membrane. The protein is Protein disulfide isomerase Creld1 (Creld1) of Rattus norvegicus (Rat).